The sequence spans 176 residues: Large ribosomal subunit protein uL10 (176 aa).

It belongs to the universal ribosomal protein uL10 family. As to quaternary structure, part of the ribosomal stalk of the 50S ribosomal subunit. The N-terminus interacts with L11 and the large rRNA to form the base of the stalk. The C-terminus forms an elongated spine to which L12 dimers bind in a sequential fashion forming a multimeric L10(L12)X complex.

Forms part of the ribosomal stalk, playing a central role in the interaction of the ribosome with GTP-bound translation factors. This Coprothermobacter proteolyticus (strain ATCC 35245 / DSM 5265 / OCM 4 / BT) protein is Large ribosomal subunit protein uL10.